Consider the following 202-residue polypeptide: Holliday junction branch migration complex subunit RuvA (202 aa).

Positions Met1–Ala64 are domain I. The segment at Gly65–Pro143 is domain II. The interval Ala144 to Leu152 is flexible linker. The segment at Val153–Pro202 is domain III.

Belongs to the RuvA family. Homotetramer. Forms an RuvA(8)-RuvB(12)-Holliday junction (HJ) complex. HJ DNA is sandwiched between 2 RuvA tetramers; dsDNA enters through RuvA and exits via RuvB. An RuvB hexamer assembles on each DNA strand where it exits the tetramer. Each RuvB hexamer is contacted by two RuvA subunits (via domain III) on 2 adjacent RuvB subunits; this complex drives branch migration. In the full resolvosome a probable DNA-RuvA(4)-RuvB(12)-RuvC(2) complex forms which resolves the HJ.

The protein localises to the cytoplasm. The RuvA-RuvB-RuvC complex processes Holliday junction (HJ) DNA during genetic recombination and DNA repair, while the RuvA-RuvB complex plays an important role in the rescue of blocked DNA replication forks via replication fork reversal (RFR). RuvA specifically binds to HJ cruciform DNA, conferring on it an open structure. The RuvB hexamer acts as an ATP-dependent pump, pulling dsDNA into and through the RuvAB complex. HJ branch migration allows RuvC to scan DNA until it finds its consensus sequence, where it cleaves and resolves the cruciform DNA. The polypeptide is Holliday junction branch migration complex subunit RuvA (Laribacter hongkongensis (strain HLHK9)).